The following is a 753-amino-acid chain: Pesticidal crystal protein Cry20Aa (753 aa).

Residues 680–696 (DTTYQPSYDNYNQNASG) are compositionally biased toward polar residues. Residues 680-721 (DTTYQPSYDNYNQNASGTYDDGYNPNASDSYDQSYTNNYSQN) are disordered. A compositionally biased stretch (low complexity) spans 712 to 721 (QSYTNNYSQN).

It belongs to the delta endotoxin family. Has low mosquitocidal activity probably due to rapid proteolysis to inactive 56 kDa and 43 kDa proteins.

Its function is as follows. Promotes colloidosmotic lysis by binding to the midgut epithelial cells of mosquitos. Active against Aedes aegypti and Culex quinquefasciatus larvae. The protein is Pesticidal crystal protein Cry20Aa (cry20Aa) of Bacillus thuringiensis subsp. fukuokaensis.